A 1362-amino-acid chain; its full sequence is MEVLMAERPTQVFHNKVIDGTAMKRLISRFIDHYGIGYTSHILDQVKTLGFRQATAASISLGIDDLLTIPSKRWLVQDAEQQSVLLEKHHHYGNVHAVEKLRQSIEIWYATSEYLRQEMTPNFRMTDPFNPVHIMSFSGARGNASQVHQLVGMRGLMSDPQGQMIDLPIQSNLREGLSLTEYIISCYGARKGVVDTAIRTSDAGYLTRRLVEVVQHIVVRRTDCGTVRGISVSPRNGMMADRIFIQTLIGRVLADDIYIGSRCIATRNQDIGVGLVNRFITFRAQPISIRTPFTCRSTSWICQLCYGRSPAHDDLVELGEAVGIIAGQSIGEPGTQLTLRTFHTGGVFTGGTAEHVRAPFNGKIKFNEDLVHPTRTRHGHPAFLCSRDLYVTIESEDIIHNVCIPPKSFLLVQNDQYVESEQVIAEIRARTSTLNLKEKVRKHIYSDSEGEMHWNTDVYHAPEFTYGNIHLLPKTSHLWILLGEPWRSSLGPCSIHKDQDQMNAYSLSVKRRYISNPSVTNNQVRHKFFSSYFSGKNKKGDRIPDYSELNRMTCTGRCNLRYPGILDGNSDLLAKRRRNRVIIPLDSIQEGENQLIPSSGISIEIPRNGILRRNSILAYFDDPRYIRKSSGLTKYETRELNSIVNEENLVEYRGVKVFWPKYQKEVNPFFFIPVEVHILAESSSIMVRHNSIIGVDTQITLNRRSRVGGLVRVKKKAEKIKLIIFSGDIHFPGKTNKAFRLIPPGGGKQNSKEYKKLKNWLYIQRMKLSRYEKKYFVLVQPVVPYKKTDGINLGRLFPADLLQESDNLQLRVVNYILYYDPILEIWDTSIQLVRTCLVLNWDQDKKIEKACASFVEIRTNGLIRDFLRIDLAKSPISYTGKRNDLPGSGLISENGSDRANGNPFSSIYSYSKATIQESLNPNQGTIHTLLNRNKESQSLIILSSSNCSRIGPFNDVKYPNVIKDSIKKDPLIPIRNSLGPLGTGFPIYHFDLFSHLITHNQILVTNYLQLDNLKQIFQILKYYLLDENGKIYNPYSCSNIILNPFKLNWYFLHYNYCEETSTIVSLGQFLCENVCIAKKGPHLKSGQVLILQVDSVVIRSAKPYLATPGATVHGHYGEILYEGDTLVTFIYEKSRSGDITQGLPKVEQVLEVRSIDSISMNLEKRIEGWNKCITRILGIPWAFFIGAKLTIVQSRISLVNKVQKVYRSQGVQIHNRHIEIIVRQITSKVLVSEDEMSNVFSPGELIGLLRAERMGRALEEAICYQAVLLGITRASMNTQSFISEASFQETARVLAKAALLGRIDWLKGLKENVVLGGMIPVGSGFKTPSSEPNNIPNNIAFELKKKNLLEGEMKDILFYHRK.

Zn(2+)-binding residues include C224, C295, C302, and C305.

It belongs to the RNA polymerase beta' chain family. RpoC2 subfamily. In terms of assembly, in plastids the minimal PEP RNA polymerase catalytic core is composed of four subunits: alpha, beta, beta', and beta''. When a (nuclear-encoded) sigma factor is associated with the core the holoenzyme is formed, which can initiate transcription. The cofactor is Zn(2+).

It localises to the plastid. It is found in the chloroplast. The catalysed reaction is RNA(n) + a ribonucleoside 5'-triphosphate = RNA(n+1) + diphosphate. Its function is as follows. DNA-dependent RNA polymerase catalyzes the transcription of DNA into RNA using the four ribonucleoside triphosphates as substrates. The sequence is that of DNA-directed RNA polymerase subunit beta'' from Helianthus annuus (Common sunflower).